Here is a 233-residue protein sequence, read N- to C-terminus: Probable F-box protein At3g56670 (233 aa).

The F-box domain occupies 22–69 (HGGVIDIPLNTDSGVTKNTPGEIALLRFKSVSKLWSSIISSRRDFIES).

The protein is Probable F-box protein At3g56670 of Arabidopsis thaliana (Mouse-ear cress).